The primary structure comprises 428 residues: Homocitrate synthase, cytosolic isozyme (428 aa).

The Pyruvate carboxyltransferase domain occupies 23 to 276; that stretch reads FQLIDSTLRE…KSKYKLHKIR (254 aa). R31 is a 2-oxoglutarate binding site. Residue E32 coordinates Mg(2+). Residues H91, R151, and T185 each coordinate 2-oxoglutarate. Residues H212 and H214 each contribute to the Mg(2+) site. H309 serves as the catalytic Proton acceptor. Phosphoserine is present on S385. T396 is modified (phosphothreonine). A disordered region spans residues 399-428; it reads VLSAKKNKKNDSDVPELATIPAAKRTKPSA. 2 positions are modified to phosphoserine: S401 and S410.

This sequence belongs to the alpha-IPM synthase/homocitrate synthase family. Homocitrate synthase LYS20/LYS21 subfamily. Requires Mg(2+) as cofactor. Mn(2+) is required as a cofactor.

The protein localises to the cytoplasm. The catalysed reaction is acetyl-CoA + 2-oxoglutarate + H2O = (2R)-homocitrate + CoA + H(+). Its pathway is amino-acid biosynthesis; L-lysine biosynthesis via AAA pathway; L-alpha-aminoadipate from 2-oxoglutarate: step 1/5. In terms of biological role, catalyzes the aldol-type condensation of 2-oxoglutarate with acetyl-CoA to yield homocitrate. Carries out the first step of the alpha-aminoadipate (AAA) lysine biosynthesis pathway. The sequence is that of Homocitrate synthase, cytosolic isozyme (LYS20) from Saccharomyces cerevisiae (strain ATCC 204508 / S288c) (Baker's yeast).